The following is a 131-amino-acid chain: Large ribosomal subunit protein bL19 (131 aa).

Belongs to the bacterial ribosomal protein bL19 family.

Functionally, this protein is located at the 30S-50S ribosomal subunit interface and may play a role in the structure and function of the aminoacyl-tRNA binding site. This is Large ribosomal subunit protein bL19 from Anaeromyxobacter sp. (strain K).